Consider the following 659-residue polypeptide: DNA ligase (659 aa).

Residues 31 to 35 (DFVYD), 80 to 81 (SL), and Glu-109 contribute to the NAD(+) site. Lys-111 functions as the N6-AMP-lysine intermediate in the catalytic mechanism. Positions 132, 166, 281, and 305 each coordinate NAD(+). Zn(2+)-binding residues include Cys-398, Cys-401, Cys-416, and Cys-421. The BRCT domain maps to 581-659 (VTTHPFNGKT…EATFKVKINE (79 aa)).

The protein belongs to the NAD-dependent DNA ligase family. LigA subfamily. Mg(2+) is required as a cofactor. Requires Mn(2+) as cofactor.

The catalysed reaction is NAD(+) + (deoxyribonucleotide)n-3'-hydroxyl + 5'-phospho-(deoxyribonucleotide)m = (deoxyribonucleotide)n+m + AMP + beta-nicotinamide D-nucleotide.. Functionally, DNA ligase that catalyzes the formation of phosphodiester linkages between 5'-phosphoryl and 3'-hydroxyl groups in double-stranded DNA using NAD as a coenzyme and as the energy source for the reaction. It is essential for DNA replication and repair of damaged DNA. In Acholeplasma laidlawii (strain PG-8A), this protein is DNA ligase.